A 383-amino-acid polypeptide reads, in one-letter code: uncharacterized protein (383 aa).

2 consecutive transmembrane segments (helical) span residues valine 49–alanine 69 and leucine 347–glycine 367.

The protein to M.tuberculosis Rv0874c.

The protein localises to the cell membrane. This is an uncharacterized protein from Mycobacterium tuberculosis (strain CDC 1551 / Oshkosh).